The following is a 168-amino-acid chain: MANVEAKQQQPDLAEKLIAVNRVSKVVKGGRIFSFTALTVVGDGAGKVGFGYGKAREVPAAIQKAMEKARRNMINVDLNGNTLQHPVKGRHAGSQVFMKPASEGTGIIAGGAMRAVLEVTGVQNVLSKCYGSTNPINVVRATISALENMNSPQSIAAKRGLRIDEILG.

The S5 DRBM domain maps to 13–76 (LAEKLIAVNR…EKARRNMINV (64 aa)).

This sequence belongs to the universal ribosomal protein uS5 family. Part of the 30S ribosomal subunit. Contacts proteins S4 and S8.

Functionally, with S4 and S12 plays an important role in translational accuracy. Located at the back of the 30S subunit body where it stabilizes the conformation of the head with respect to the body. This Pseudoalteromonas translucida (strain TAC 125) protein is Small ribosomal subunit protein uS5.